The chain runs to 783 residues: DNA ligase (783 aa).

Residues 42–46 (DAEYD), 91–92 (SL), and Glu-125 each bind NAD(+). Lys-127 functions as the N6-AMP-lysine intermediate in the catalytic mechanism. Arg-148, Glu-185, Lys-302, and Lys-326 together coordinate NAD(+). 4 residues coordinate Zn(2+): Cys-421, Cys-423, Cys-445, and Cys-451. The BRCT domain occupies 705–783 (KTDTAVAGKT…EDEWLELVAG (79 aa)).

This sequence belongs to the NAD-dependent DNA ligase family. LigA subfamily. It depends on Mg(2+) as a cofactor. Requires Mn(2+) as cofactor.

The catalysed reaction is NAD(+) + (deoxyribonucleotide)n-3'-hydroxyl + 5'-phospho-(deoxyribonucleotide)m = (deoxyribonucleotide)n+m + AMP + beta-nicotinamide D-nucleotide.. Its function is as follows. DNA ligase that catalyzes the formation of phosphodiester linkages between 5'-phosphoryl and 3'-hydroxyl groups in double-stranded DNA using NAD as a coenzyme and as the energy source for the reaction. It is essential for DNA replication and repair of damaged DNA. In Caulobacter vibrioides (strain ATCC 19089 / CIP 103742 / CB 15) (Caulobacter crescentus), this protein is DNA ligase.